The chain runs to 140 residues: Transcription antitermination protein NusB (140 aa).

It belongs to the NusB family.

Its function is as follows. Involved in transcription antitermination. Required for transcription of ribosomal RNA (rRNA) genes. Binds specifically to the boxA antiterminator sequence of the ribosomal RNA (rrn) operons. The chain is Transcription antitermination protein NusB from Elusimicrobium minutum (strain Pei191).